A 381-amino-acid chain; its full sequence is MSLPIVIIGSGFASYQLIKTIRRTNNDCPIHVFTNDSGDDYNKPDLSHVFSKQQSPEEVVTLSGGDFAEQYNVILHRHTWVESIDTEIQAITANGEQYAYGKLVLATGSQTFIPPFHGDGCGDILTLNSLKEFAGIQQKVLESKKVLVVGGGLIGTELAMDLANAGKMVTLVEPNTHLLANMVPDFISLPLEKACKEKGITVNLSDCVQAVNKQEQGYRVTTSNGHSYYVDCVISAAGLKPNTKLATEANLMVNRGIVVDLNLQTSANNIYALGDCAEIEGKVMAYLQPILLSANALAKTLLGTDTALSMPNMMVKVKTPNYPIQLAGNTSTDIERWSVDIDTQGLCAKAYNINNQLTGFVVTNERVKNAFPLFRELNTTN.

It belongs to the FAD-dependent oxidoreductase family. FAD is required as a cofactor.

It localises to the cytoplasm. It carries out the reaction 2 reduced [nitric oxide reductase rubredoxin domain] + NAD(+) + H(+) = 2 oxidized [nitric oxide reductase rubredoxin domain] + NADH. It functions in the pathway nitrogen metabolism; nitric oxide reduction. One of at least two accessory proteins for anaerobic nitric oxide (NO) reductase. Reduces the rubredoxin moiety of NO reductase. This chain is Nitric oxide reductase FlRd-NAD(+) reductase, found in Aliivibrio fischeri (strain ATCC 700601 / ES114) (Vibrio fischeri).